A 1419-amino-acid polypeptide reads, in one-letter code: Myosin-2B (1419 aa).

Positions 4–57 constitute a Myosin N-terminal SH3-like domain; the sequence is EVGTRCWYPNSEAGWIGCEVTKNDFQDGTYHIELTSETGLVIPIETKHLESNNA. Positions 75 to 780 constitute a Myosin motor domain; the sequence is EATHDLTTLS…VLAYLEKIRS (706 aa). 169–176 contacts ATP; it reads GESGAGKT. An actin-binding region spans residues 451 to 531; that stretch reads FIGVLDIYGF…LGILSLLDEE (81 aa). IQ domains are found at residues 783 to 805, 806 to 830, 831 to 854, 855 to 878, 879 to 901, and 902 to 931; these read VTEL…LYLQ, AMLS…DFEM, KTDA…VFET, LKNI…QREF, ESRS…RYQT, and LKTG…QAES. A coiled-coil region spans residues 909–940; the sequence is IQALVRRKQSQEKLKQLKIQAESAASLKNSAA. The interval 1061–1419 is non alpha-helical, tail domain; that stretch reads KDNERTSTSS…VIKELGSLLA (359 aa). The Dilute domain occupies 1143-1357; that stretch reads HSILKQTVQD…LNHLSNTARR (215 aa).

Belongs to the TRAFAC class myosin-kinesin ATPase superfamily. Myosin family. Homodimer. Interacts with calmodulin (CMD1) and the myosin light chain MLC1 through its IQ repeats.

Functionally, myosin heavy chain that is required for the cell cycle-regulated transport of various organelles and proteins for their segregation. Functions by binding with its tail domain to receptor proteins on organelles and exerting force with its N-terminal motor domain against actin filaments, thereby transporting its cargo along polarized actin cables. This Naumovozyma castellii (Yeast) protein is Myosin-2B (MYO2B).